The primary structure comprises 292 residues: MARTLDGTEISRVMRAEMAQDVAALQAAGVTPGLSVVLVGNNPASQAYVASKTRACESLGMRGQTLTLPEDVSKEALFAVIDRLNADPSVHGILVQLPLPAHLPYKAVLEHIHPAKDVDGFHPVNAGLAFVGDPRAFVPCTPAGIMEMLRREDIPTRGKHVVIVGRSLIVSKPLASLLMAPGPDATVTITHRHTPDLASFTRQADILIVAVGKQNLITADMVKPGVVVIDVGQNRVSDASSPRGYRMVGDVDFDAIQPIASAITPVPGGVGPMTITMLLANTLQAARQTQAR.

165–167 (GRS) contributes to the NADP(+) binding site.

This sequence belongs to the tetrahydrofolate dehydrogenase/cyclohydrolase family. Homodimer.

It catalyses the reaction (6R)-5,10-methylene-5,6,7,8-tetrahydrofolate + NADP(+) = (6R)-5,10-methenyltetrahydrofolate + NADPH. The catalysed reaction is (6R)-5,10-methenyltetrahydrofolate + H2O = (6R)-10-formyltetrahydrofolate + H(+). The protein operates within one-carbon metabolism; tetrahydrofolate interconversion. Functionally, catalyzes the oxidation of 5,10-methylenetetrahydrofolate to 5,10-methenyltetrahydrofolate and then the hydrolysis of 5,10-methenyltetrahydrofolate to 10-formyltetrahydrofolate. The protein is Bifunctional protein FolD 1 of Myxococcus xanthus (strain DK1622).